The following is a 231-amino-acid chain: Large ribosomal subunit protein uL5m (231 aa).

The protein belongs to the universal ribosomal protein uL5 family.

The protein localises to the mitochondrion. This Prototheca wickerhamii protein is Large ribosomal subunit protein uL5m (RPL5).